We begin with the raw amino-acid sequence, 259 residues long: MTKTLTQHLETIKREGKGIFLPYIMAGDHEKGLAGLPETIAFLENLGVSAIEIGLPFSDPVADGPVIEEAGLRSLGHHTSAKSLIASLQKLDTQLPLIIMTYFNPIFQYGLKDFIKDLARTPVKGLIIPDLPYEHRDFILPLLEDSDIALVPLVSLTTGLERQQELIKEAEGFIYAVAINGVTGKSGSYRNDLDQHLSKLHDIAEIPVLTGFGVSTLEDVDRFNQVSDGVIVGSKIVKALHEKDASIAAFIQEAAAYKK.

Catalysis depends on proton acceptor residues glutamate 52 and aspartate 63.

The protein belongs to the TrpA family. Tetramer of two alpha and two beta chains.

The catalysed reaction is (1S,2R)-1-C-(indol-3-yl)glycerol 3-phosphate + L-serine = D-glyceraldehyde 3-phosphate + L-tryptophan + H2O. Its pathway is amino-acid biosynthesis; L-tryptophan biosynthesis; L-tryptophan from chorismate: step 5/5. The alpha subunit is responsible for the aldol cleavage of indoleglycerol phosphate to indole and glyceraldehyde 3-phosphate. The protein is Tryptophan synthase alpha chain of Streptococcus sanguinis (strain SK36).